Consider the following 351-residue polypeptide: Pleckstrin (351 aa).

One can recognise a PH 1 domain in the interval 4-101 (KRIREGYLVK…WVRDTKKAIK (98 aa)). Position 64 is an N6-acetyllysine (K64). S113 and S117 each carry phosphoserine. The region spanning 136–221 (IEKGIKELNL…NPDAFYYFPD (86 aa)) is the DEP domain. The region spanning 244–348 (VIIKQGCLLK…WIKAIQVASR (105 aa)) is the PH 2 domain.

In terms of biological role, major protein kinase C substrate of platelets. This Canis lupus familiaris (Dog) protein is Pleckstrin (PLEK).